The primary structure comprises 243 residues: UDP-2,3-diacylglucosamine hydrolase (243 aa).

Mn(2+) is bound by residues D8, H10, D41, N79, and H114. Substrate is bound at residue 79–80 (NR). Substrate-binding residues include D122, K164, K167, and H195. Mn(2+) contacts are provided by H195 and H197.

Belongs to the LpxH family. Mn(2+) serves as cofactor.

The protein localises to the cell inner membrane. It carries out the reaction UDP-2-N,3-O-bis[(3R)-3-hydroxytetradecanoyl]-alpha-D-glucosamine + H2O = 2-N,3-O-bis[(3R)-3-hydroxytetradecanoyl]-alpha-D-glucosaminyl 1-phosphate + UMP + 2 H(+). The protein operates within glycolipid biosynthesis; lipid IV(A) biosynthesis; lipid IV(A) from (3R)-3-hydroxytetradecanoyl-[acyl-carrier-protein] and UDP-N-acetyl-alpha-D-glucosamine: step 4/6. Functionally, hydrolyzes the pyrophosphate bond of UDP-2,3-diacylglucosamine to yield 2,3-diacylglucosamine 1-phosphate (lipid X) and UMP by catalyzing the attack of water at the alpha-P atom. Involved in the biosynthesis of lipid A, a phosphorylated glycolipid that anchors the lipopolysaccharide to the outer membrane of the cell. This is UDP-2,3-diacylglucosamine hydrolase from Vibrio vulnificus (strain CMCP6).